We begin with the raw amino-acid sequence, 804 residues long: Enhancer of polycomb homolog 2 (804 aa).

Disordered stretches follow at residues 372-395, 484-508, 603-624, and 646-669; these read QSSD…ENDP, GFSS…DRHC, QSQQ…SDCM, and PVRS…VQPS. Polar residues-rich tracts occupy residues 611–624 and 654–669; these read SHPK…SDCM and DQNA…VQPS.

This sequence belongs to the enhancer of polycomb family.

It localises to the nucleus. May play a role in transcription or DNA repair. The sequence is that of Enhancer of polycomb homolog 2 (epc2) from Xenopus laevis (African clawed frog).